A 35-amino-acid polypeptide reads, in one-letter code: Photosystem II reaction center protein T (35 aa).

The helical transmembrane segment at 3-23 (SVAYILIFTLCIGTIFFAIAF) threads the bilayer.

The protein belongs to the PsbT family. PSII is composed of 1 copy each of membrane proteins PsbA, PsbB, PsbC, PsbD, PsbE, PsbF, PsbH, PsbI, PsbJ, PsbK, PsbL, PsbM, PsbT, PsbX, PsbY, PsbZ, Psb30/Ycf12, peripheral proteins PsbO, CyanoQ (PsbQ), PsbU, PsbV and a large number of cofactors. It forms dimeric complexes.

The protein resides in the cellular thylakoid membrane. Functionally, found at the monomer-monomer interface of the photosystem II (PS II) dimer, plays a role in assembly and dimerization of PSII. PSII is a light-driven water plastoquinone oxidoreductase, using light energy to abstract electrons from H(2)O, generating a proton gradient subsequently used for ATP formation. In Nostoc punctiforme (strain ATCC 29133 / PCC 73102), this protein is Photosystem II reaction center protein T.